A 208-amino-acid chain; its full sequence is Small ribosomal subunit protein uS4 (208 aa).

In terms of domain architecture, S4 RNA-binding spans 98-160 (RRLDNVVYRM…SKNNVQIQRA (63 aa)).

It belongs to the universal ribosomal protein uS4 family. Part of the 30S ribosomal subunit. Contacts protein S5. The interaction surface between S4 and S5 is involved in control of translational fidelity.

Functionally, one of the primary rRNA binding proteins, it binds directly to 16S rRNA where it nucleates assembly of the body of the 30S subunit. In terms of biological role, with S5 and S12 plays an important role in translational accuracy. The sequence is that of Small ribosomal subunit protein uS4 from Nautilia profundicola (strain ATCC BAA-1463 / DSM 18972 / AmH).